A 1044-amino-acid polypeptide reads, in one-letter code: Eukaryotic translation initiation factor 3 subunit A (1044 aa).

Residues 92 to 121 (LKKFIELAEKKVTEAQAKADEIQSSLESAA) adopt a coiled-coil conformation. A PCI domain is found at 339–523 (MTKAASFVLL…GVLTFDTDIF (185 aa)). The stretch at 611–907 (IDKKKEAATD…EARRAARKAG (297 aa)) forms a coiled coil. Over residues 797–901 (SEKRHEEFEK…QREEEAEARR (105 aa)) the composition is skewed to basic and acidic residues. Residues 797–1044 (SEKRHEEFEK…WVPRWKQQQS (248 aa)) form a disordered region. Low complexity-rich tracts occupy residues 943 to 956 (KEAA…AAPA) and 1006 to 1017 (SSSSQPPSRTQT).

The protein belongs to the eIF-3 subunit A family. Component of the eukaryotic translation initiation factor 3 (eIF-3) complex.

The protein localises to the cytoplasm. Functionally, RNA-binding component of the eukaryotic translation initiation factor 3 (eIF-3) complex, which is involved in protein synthesis of a specialized repertoire of mRNAs and, together with other initiation factors, stimulates binding of mRNA and methionyl-tRNAi to the 40S ribosome. The eIF-3 complex specifically targets and initiates translation of a subset of mRNAs involved in cell proliferation. The sequence is that of Eukaryotic translation initiation factor 3 subunit A (tif32) from Aspergillus clavatus (strain ATCC 1007 / CBS 513.65 / DSM 816 / NCTC 3887 / NRRL 1 / QM 1276 / 107).